Here is a 91-residue protein sequence, read N- to C-terminus: Small ribosomal subunit protein bS18 (91 aa).

Belongs to the bacterial ribosomal protein bS18 family. As to quaternary structure, part of the 30S ribosomal subunit. Forms a tight heterodimer with protein bS6.

Binds as a heterodimer with protein bS6 to the central domain of the 16S rRNA, where it helps stabilize the platform of the 30S subunit. The polypeptide is Small ribosomal subunit protein bS18 (Paraburkholderia xenovorans (strain LB400)).